A 414-amino-acid polypeptide reads, in one-letter code: uncharacterized protein (414 aa).

The protein belongs to the UbiH/COQ6 family. The cofactor is FAD.

This is an uncharacterized protein from Synechocystis sp. (strain ATCC 27184 / PCC 6803 / Kazusa).